The following is a 159-amino-acid chain: Cyclic pyranopterin monophosphate synthase (159 aa).

Substrate-binding positions include 75–77 (MCH) and 113–114 (ME). The active site involves Asp128.

It belongs to the MoaC family. Homohexamer; trimer of dimers.

The enzyme catalyses (8S)-3',8-cyclo-7,8-dihydroguanosine 5'-triphosphate = cyclic pyranopterin phosphate + diphosphate. It functions in the pathway cofactor biosynthesis; molybdopterin biosynthesis. Catalyzes the conversion of (8S)-3',8-cyclo-7,8-dihydroguanosine 5'-triphosphate to cyclic pyranopterin monophosphate (cPMP). This chain is Cyclic pyranopterin monophosphate synthase, found in Desulfatibacillum aliphaticivorans.